Consider the following 495-residue polypeptide: Syntaphilin (495 aa).

Residues 1-74 (MAMSLQGSRR…HGIKPPTPEQ (74 aa)) form a disordered region. Residues 7 to 49 (GSRRASAGSRRRTSPPVSVRDAYGTSSLSSSSNSGSCKGSDSS) are compositionally biased toward low complexity. The stretch at 79–161 (LQQKEVCIRH…VKNNLIDKDK (83 aa)) forms a coiled coil. The interval 191–244 (VAKEEGTGESAGGSPARSLTRSSTYTKLSDPAVCGDRQPGDPSNTSAEDGADSG) is disordered. Phosphoserine occurs at positions 200 and 204. A compositionally biased stretch (polar residues) spans 207–217 (RSLTRSSTYTK). At Thr214 the chain carries Phosphothreonine. At Ser219 the chain carries Phosphoserine. A Phosphothreonine modification is found at Thr235. Residues 427–446 (YIVDLLAVVVPAVPTVAWLC) form a helical membrane-spanning segment.

As to quaternary structure, binds to STX1A. Interacts with DNM1; this interaction inhibits the binding of DNM1 to AMPH and DNM1-receptor-mediated endocytosis.

The protein localises to the membrane. The protein resides in the synapse. Its subcellular location is the synaptosome. Its function is as follows. Inhibits SNARE complex formation by absorbing free STX1A. The polypeptide is Syntaphilin (Mus musculus (Mouse)).